Reading from the N-terminus, the 92-residue chain is Probable Fe(2+)-trafficking protein (92 aa).

It belongs to the Fe(2+)-trafficking protein family.

In terms of biological role, could be a mediator in iron transactions between iron acquisition and iron-requiring processes, such as synthesis and/or repair of Fe-S clusters in biosynthetic enzymes. In Shewanella piezotolerans (strain WP3 / JCM 13877), this protein is Probable Fe(2+)-trafficking protein.